Reading from the N-terminus, the 465-residue chain is Probable citrate synthase, mitochondrial (465 aa).

Catalysis depends on residues H303, H349, and D404.

It belongs to the citrate synthase family. Homodimer.

The protein localises to the mitochondrion matrix. It carries out the reaction oxaloacetate + acetyl-CoA + H2O = citrate + CoA + H(+). It functions in the pathway carbohydrate metabolism; tricarboxylic acid cycle; isocitrate from oxaloacetate: step 1/2. This chain is Probable citrate synthase, mitochondrial, found in Glossina morsitans morsitans (Savannah tsetse fly).